We begin with the raw amino-acid sequence, 1989 residues long: Zinc finger C3H1 domain-containing protein (1989 aa).

Disordered regions lie at residues 1–133 (MATA…RPSF), 148–218 (GRPY…SKNE), 251–290 (SSKE…PEEK), and 310–365 (LPGD…LGED). Ala2 is subject to N-acetylalanine. 3 positions are modified to phosphoserine: Ser15, Ser28, and Ser34. A compositionally biased stretch (acidic residues) spans 20-32 (GELEDGEISDDDN). Residues 33–44 (NSQIRSRSSSSS) show a composition bias toward low complexity. Residues 62 to 72 (RGGGSGGGGGS) are compositionally biased toward gly residues. Composition is skewed to low complexity over residues 114 to 132 (PPSV…PRPS), 183 to 192 (GFSSSQSWRE), and 201 to 210 (KSFGRSPSRK). Ser128 is subject to Phosphoserine. The stretch at 219-259 (NCVEETFEDLLLKYKQIQLELECINKDEKLALSSKEENVQE) forms a coiled coil. Residue Ser251 is modified to Phosphoserine. A compositionally biased stretch (basic and acidic residues) spans 251–262 (SSKEENVQEDPK). Polar residues predominate over residues 266-279 (FEDQTSTDNVSITK). Residues 280-290 (DSSKEVAPEEK) show a composition bias toward basic and acidic residues. Residues 330–340 (KSDTTDSSQGL) are compositionally biased toward polar residues. Residues Ser352 and Ser383 each carry the phosphoserine modification. Positions 358–389 (SEKKLGEDEEELSELQLRLLALQSASKKWQQK) form a coiled coil. Disordered stretches follow at residues 385-671 (KWQQ…SNLS) and 711-770 (LNDS…PEAL). The span at 392-402 (QVMKESKEKLT) shows a compositional bias: basic and acidic residues. The span at 430-440 (ALRKQQTKAWK) shows a compositional bias: basic residues. The stretch at 432–487 (RKQQTKAWKKLQQQKEQERQKEEDQRKQAEEEERRKREEEIRKIRDLSNQEEQYNR) forms a coiled coil. Composition is skewed to basic and acidic residues over residues 444-479 (QQKE…RDLS) and 501-515 (KSSD…DKQP). Over residues 527 to 537 (NYEEVAMDTDS) the composition is skewed to acidic residues. Residues 574-583 (VSSLPPLSQP) show a composition bias toward low complexity. The segment covering 594-616 (PLPPLPPLPPLPPEDPEQPPKPP) has biased composition (pro residues). Residues 647 to 671 (TSSNSDPPSPPVLNNSHPVPRSNLS) are compositionally biased toward polar residues. Residues Ser662, Ser714, Ser717, and Ser719 each carry the phosphoserine modification. Over residues 755-770 (PKSEKENDPLRTPEAL) the composition is skewed to basic and acidic residues. At Thr766 the chain carries Phosphothreonine. 2 positions are modified to phosphoserine: Ser805 and Ser809. The stretch at 847–909 (LKNLVQQEAK…QQRVTIKKAL (63 aa)) forms a coiled coil. Residues Ser948, Ser949, and Ser953 each carry the phosphoserine modification. The stretch at 965-989 (EKRRLQKLEYEYALKIQKLKEARAL) forms a coiled coil. 2 positions are modified to phosphoserine: Ser998 and Ser1046. The segment at 1185–1206 (FCRFDLTGTCNDDDCQWQHIQD) adopts a C3H1-type zinc-finger fold. Phosphoserine occurs at positions 1301, 1303, and 1304. TPR repeat units lie at residues 1361–1400 (VQLW…NKDN), 1401–1434 (PEIW…APDY), 1438–1471 (WTFL…ETSN), 1478–1511 (LEAL…ANDG), 1602–1635 (LPLY…CPIN), 1636–1669 (CQLL…NPQN), and 1745–1778 (PYLW…AMRC).

As to quaternary structure, component of the poly(A) tail exosome targeting (PAXT) complex made of accessory factors, such as PABPN1, ZFC3H1 and MTREX, and which directs a subset of long and polyadenylated poly(A) RNAs for exosomal degradation. Co-localizes with component of the CBC-ARS2 (CBCA) complex. Binds to RNA exosome components. Interacts with NCBP1/CBP80, ZC3H18, MTREX and PABPN1 in a RNase-insensitive manner, and with PABPC4, PABPC1 and ZC3H14 in a RNase-sensitive manner.

It localises to the nucleus. Subunit of the trimeric poly(A) tail exosome targeting (PAXT) complex, a complex that directs a subset of long and polyadenylated poly(A) RNAs for exosomal degradation. The RNA exosome is fundamental for the degradation of RNA in eukaryotic nuclei. Substrate targeting is facilitated by its cofactor MTREX, which links to RNA-binding protein adapters. In Homo sapiens (Human), this protein is Zinc finger C3H1 domain-containing protein (ZFC3H1).